We begin with the raw amino-acid sequence, 161 residues long: Endoribonuclease YbeY (161 aa).

Residues H121, H125, and H131 each coordinate Zn(2+).

Belongs to the endoribonuclease YbeY family. Zn(2+) is required as a cofactor.

It localises to the cytoplasm. Its function is as follows. Single strand-specific metallo-endoribonuclease involved in late-stage 70S ribosome quality control and in maturation of the 3' terminus of the 16S rRNA. The sequence is that of Endoribonuclease YbeY from Bordetella avium (strain 197N).